The following is a 178-amino-acid chain: Interleukin-10 (178 aa).

Positions 1 to 18 are cleaved as a signal peptide; the sequence is MHSSALLCCLVLLTGVRA. 2 disulfide bridges follow: cysteine 30/cysteine 126 and cysteine 80/cysteine 132. Residue asparagine 134 is glycosylated (N-linked (GlcNAc...) asparagine).

Belongs to the IL-10 family. Homodimer. Interacts with IL10RA and IL10RB.

Its subcellular location is the secreted. In terms of biological role, major immune regulatory cytokine that acts on many cells of the immune system where it has profound anti-inflammatory functions, limiting excessive tissue disruption caused by inflammation. Mechanistically, IL10 binds to its heterotetrameric receptor comprising IL10RA and IL10RB leading to JAK1 and STAT2-mediated phosphorylation of STAT3. In turn, STAT3 translocates to the nucleus where it drives expression of anti-inflammatory mediators. Targets antigen-presenting cells (APCs) such as macrophages and monocytes and inhibits their release of pro-inflammatory cytokines including granulocyte-macrophage colony-stimulating factor /GM-CSF, granulocyte colony-stimulating factor/G-CSF, IL-1 alpha, IL-1 beta, IL-6, IL-8 and TNF-alpha. Also interferes with antigen presentation by reducing the expression of MHC-class II and co-stimulatory molecules, thereby inhibiting their ability to induce T cell activation. In addition, controls the inflammatory response of macrophages by reprogramming essential metabolic pathways including mTOR signaling. The protein is Interleukin-10 (IL10) of Pan troglodytes (Chimpanzee).